The primary structure comprises 397 residues: Acetate kinase (397 aa).

Asparagine 8 is a binding site for Mg(2+). Residue lysine 15 coordinates ATP. Arginine 92 serves as a coordination point for substrate. Catalysis depends on aspartate 149, which acts as the Proton donor/acceptor. ATP-binding positions include 209–213 (HLGNG), 283–285 (DFR), and 331–335 (GVGEN). Glutamate 385 is a binding site for Mg(2+).

Belongs to the acetokinase family. In terms of assembly, homodimer. It depends on Mg(2+) as a cofactor. Mn(2+) is required as a cofactor.

The protein resides in the cytoplasm. The catalysed reaction is acetate + ATP = acetyl phosphate + ADP. It participates in metabolic intermediate biosynthesis; acetyl-CoA biosynthesis; acetyl-CoA from acetate: step 1/2. Functionally, catalyzes the formation of acetyl phosphate from acetate and ATP. Can also catalyze the reverse reaction. This Corynebacterium glutamicum (strain ATCC 13032 / DSM 20300 / JCM 1318 / BCRC 11384 / CCUG 27702 / LMG 3730 / NBRC 12168 / NCIMB 10025 / NRRL B-2784 / 534) protein is Acetate kinase.